Reading from the N-terminus, the 220-residue chain is uncharacterized protein (220 aa).

A disordered region spans residues 1–50; the sequence is MTDDVRDVNTETTDATEVAEIDSAAGEAGDSATEAFDTDSATESTAQKGQ. A compositionally biased stretch (polar residues) spans 39-48; that stretch reads DSATESTAQK. Residues 65–85 traverse the membrane as a helical segment; sequence VPVILILLMLISGGATGWLYL.

It to M.tuberculosis Rv1363c.

It is found in the membrane. This is an uncharacterized protein from Mycobacterium tuberculosis (strain CDC 1551 / Oshkosh).